A 96-amino-acid chain; its full sequence is UPF0235 protein VC_0458 (96 aa).

It belongs to the UPF0235 family.

This is UPF0235 protein VC_0458 from Vibrio cholerae serotype O1 (strain ATCC 39315 / El Tor Inaba N16961).